The sequence spans 988 residues: DExH-box ATP-dependent RNA helicase DExH9 (988 aa).

Residues Met1–Ser27 are disordered. A Helicase ATP-binding domain is found at Ile76–Cys232. Ala89–Thr96 contacts ATP. A DEVH box motif is present at residues Asp180–His183. The 203-residue stretch at Asp307–Arg509 folds into the Helicase C-terminal domain.

It belongs to the DExH box helicase family. SKI2 subfamily. In terms of tissue distribution, ubiquitous but preferentially expressed in active tissues.

The protein localises to the nucleus. It localises to the nucleolus. It catalyses the reaction ATP + H2O = ADP + phosphate + H(+). In terms of biological role, ATP-dependent RNA helicase that associates with the RNA exosome complex. Required for proper rRNA biogenesis and development. Involved in the 3'-processing of the 7S pre-RNA to the mature 5.8S rRNA and also in the removal of rRNA maturation by-products. In Arabidopsis thaliana (Mouse-ear cress), this protein is DExH-box ATP-dependent RNA helicase DExH9.